The following is a 446-amino-acid chain: tRNA modification GTPase MnmE (446 aa).

Positions 24, 81, and 120 each coordinate (6S)-5-formyl-5,6,7,8-tetrahydrofolate. The TrmE-type G domain occupies 216-368; sequence GLHAVLIGPP…LHTRLRELAL (153 aa). N226 lines the K(+) pocket. Residues 226–231, 245–251, and 270–273 each bind GTP; these read NAGKSS, TDVAGTT, and DTAG. S230 is a binding site for Mg(2+). The K(+) site is built by T245, V247, and T250. T251 is a binding site for Mg(2+). K446 provides a ligand contact to (6S)-5-formyl-5,6,7,8-tetrahydrofolate.

This sequence belongs to the TRAFAC class TrmE-Era-EngA-EngB-Septin-like GTPase superfamily. TrmE GTPase family. Homodimer. Heterotetramer of two MnmE and two MnmG subunits. Requires K(+) as cofactor.

It localises to the cytoplasm. Exhibits a very high intrinsic GTPase hydrolysis rate. Involved in the addition of a carboxymethylaminomethyl (cmnm) group at the wobble position (U34) of certain tRNAs, forming tRNA-cmnm(5)s(2)U34. In Xanthomonas campestris pv. campestris (strain 8004), this protein is tRNA modification GTPase MnmE.